The primary structure comprises 365 residues: Phosphate acyltransferase (365 aa).

It belongs to the PlsX family. As to quaternary structure, homodimer. Probably interacts with PlsY.

The protein resides in the cytoplasm. The enzyme catalyses a fatty acyl-[ACP] + phosphate = an acyl phosphate + holo-[ACP]. Its pathway is lipid metabolism; phospholipid metabolism. Catalyzes the reversible formation of acyl-phosphate (acyl-PO(4)) from acyl-[acyl-carrier-protein] (acyl-ACP). This enzyme utilizes acyl-ACP as fatty acyl donor, but not acyl-CoA. The polypeptide is Phosphate acyltransferase (Klebsiella pneumoniae subsp. pneumoniae (strain ATCC 700721 / MGH 78578)).